We begin with the raw amino-acid sequence, 144 residues long: Large ribosomal subunit protein uL15 (144 aa).

A disordered region spans residues 1–58; that stretch reads MRLNELAPEPGSRPSAKRVGRGIGSGLGKTGGRGHKGLKSRSGGSVAPGFEGGQQPLA. A compositionally biased stretch (gly residues) spans 21-31; it reads RGIGSGLGKTG.

The protein belongs to the universal ribosomal protein uL15 family. As to quaternary structure, part of the 50S ribosomal subunit.

Binds to the 23S rRNA. The chain is Large ribosomal subunit protein uL15 from Marinobacter nauticus (strain ATCC 700491 / DSM 11845 / VT8) (Marinobacter aquaeolei).